A 99-amino-acid polypeptide reads, in one-letter code: HTH-type transcriptional regulator YgaV (99 aa).

In terms of domain architecture, HTH arsR-type spans 7 to 99; that stretch reads LQASAEQAAA…IATLKNVYCP (93 aa). A DNA-binding region (H-T-H motif) is located at residues 41 to 64; that stretch reads AGELTRITGLSASATSQHLARMRD.

Its activity is regulated as follows. In the presence of H(2)S, two cysteine residues form an intramolecular tetrasulfide bond, which attenuates the binding of YgaV to DNA. Both unmodified YgaV and sulfide-modified YgaV can probably function as either a repressor or an activator. Binds heme, which may influence the DNA-binding affinity. Its function is as follows. Transcriptional regulator that regulates large-scale gene expression in response to sulfide. May act as a global regulator responsible for redox homeostasis. It functions as both a repressor and an activator. In the absence of sulfide compounds, it negatively regulates many anaerobic respiratory genes, including formate, fumarate, lactate, nitrate and nitrite reductase genes. In the presence of hydrogen sulfide (H(2)S), YgaV activity is attenuated, leading to the expression of anaerobic respiratory and ROS scavenging genes, which contributes to redox homeostasis, reactive oxygen species (ROS) scavenging and antibiotic tolerance. It responds to H(2)O(2) scavenging and increases antibiotic tolerance under H(2)S-atmospheric conditions. It also negatively regulates its own expression by binding to the ygaVP promoter region. May also be involved in regulatory mechanisms that operate independently of sulfide. This Escherichia coli (strain K12) protein is HTH-type transcriptional regulator YgaV (ygaV).